The chain runs to 344 residues: Polycomb group RING finger protein 2 (344 aa).

An RING-type zinc finger spans residues Cys-18–Asp-57. Residues Lys-51 and Lys-88 each participate in a glycyl lysine isopeptide (Lys-Gly) (interchain with G-Cter in SUMO2) cross-link. The Nuclear localization signal signature appears at Lys-81–Arg-95. The span at Thr-240–Ala-253 shows a compositional bias: polar residues. The disordered stretch occupies residues Thr-240–Thr-344. Positions Ala-263 to Ala-313 are enriched in low complexity. Residues Asn-314–Ser-328 are compositionally biased toward polar residues. A Phosphothreonine modification is found at Thr-344.

In terms of assembly, exists as both a monomer and homodimer. Component of a PRC1-like complex. Interacts with CBX8, RING1 and RNF2. Interacts with CBX7. Interacts with PHC2. Phosphorylated. Homodimer formation is regulated by phosphorylation with only unphosphorylated proteins forming homodimers. Detected in all tissues examined with high expression found in placenta lung and kidney and low expression, in liver, pancreas and skeletal muscle.

The protein resides in the nucleus. Transcriptional repressor. Binds specifically to the DNA sequence 5'-GACTNGACT-3'. Has tumor suppressor activity. May play a role in control of cell proliferation and/or neural cell development. Regulates proliferation of early T progenitor cells by maintaining expression of HES1. Also plays a role in antero-posterior specification of the axial skeleton and negative regulation of the self-renewal activity of hematopoietic stem cells. Component of a Polycomb group (PcG) multiprotein PRC1-like complex, a complex class required to maintain the transcriptionally repressive state of many genes, including Hox genes, throughout development. PcG PRC1 complex acts via chromatin remodeling and modification of histones; it mediates monoubiquitination of histone H2A 'Lys-119', rendering chromatin heritably changed in its expressibility. Within the PRC1-like complex, regulates RNF2 ubiquitin ligase activity. The sequence is that of Polycomb group RING finger protein 2 (PCGF2) from Homo sapiens (Human).